The chain runs to 59 residues: Cecropin-A2 (59 aa).

A signal peptide spans 1–23 (MNFNKLFAIVLLAALVLLGQTEA).

Belongs to the cecropin family.

The protein localises to the secreted. Its function is as follows. Cecropins have lytic and antibacterial activity against several Gram-positive and Gram-negative bacteria. The protein is Cecropin-A2 (CECA2) of Aedes albopictus (Asian tiger mosquito).